The primary structure comprises 187 residues: MSTAEKVQPRLKQRYRSEIREALNKQFSYGNVMQIPTVVKVVVNMGVGDAARDAKLINGAVSDLALITGQKPEVRKARKSIAQFKLREGMPIGVRVTLRDDRMWEFLDRLTSIALPRIRDFRGLSPKQFDGVGNYTFGLAEQSVFHEIDVDKIDRVRGMDINVVTSATTDDEGRALLRALGFPFKEN.

This sequence belongs to the universal ribosomal protein uL5 family. Part of the 50S ribosomal subunit; part of the 5S rRNA/L5/L18/L25 subcomplex. Contacts the 5S rRNA and the P site tRNA. Forms a bridge to the 30S subunit in the 70S ribosome.

In terms of biological role, this is one of the proteins that bind and probably mediate the attachment of the 5S RNA into the large ribosomal subunit, where it forms part of the central protuberance. In the 70S ribosome it contacts protein S13 of the 30S subunit (bridge B1b), connecting the 2 subunits; this bridge is implicated in subunit movement. Contacts the P site tRNA; the 5S rRNA and some of its associated proteins might help stabilize positioning of ribosome-bound tRNAs. The chain is Large ribosomal subunit protein uL5 from Mycobacterium leprae (strain Br4923).